Consider the following 878-residue polypeptide: MADIDARLREDVHLLGELLGNTIREQRGAEFLDKIERIRKGAKAGRRGSAEGAEQLSSSVDGLEDDELLPVARAFNQFLNLANIAEQYQLMHRRDDAQPLPFESRVLSELLDRLKAEGHQPETLARQLSKLEIELVLTAHPTEVARRTLIQKYDAIATQLAALDHRDLNSAERAQITSRLQRLIAEAWHTEEIRRIRPTPVDEAKWGFAVIEHSLWHAIPNYLRKADHVLHAATGLHLPLESAPIRFASWMGGDRDGNPNVTAAVTREVLLLARWMAADLYLRDVDNLAAELSMQQASDALRASVGDSAEPYRAELKRLRERLRATRNWANASLTETLPAPEAVLRDNRELLDPLLLCFQSLHECGMGVIADGPLLDCLRRAVTFGLFLVRLDVRQDSTRHCAAMTEITDYLGLGRYEEWDEQTRIDFLLRELNNRRPLLPSYFKPAADTAEVLATCREVAAAPAASLGSYVISMAGSASDVLAVQLLLKESGLQRPMRVVPLFETLADLDNAGPVIETLLGLPGYRSRLQGPQEVMIGYSDSAKDAGTTAAAWAQYRAQEKLVEICREQQVELLLFHGRGGTVGRGGGPAHAAILSQPPGSVAGRFRTTEQGEMIRFKFGLPDIAEQNLNLYLAAVLEATLLPPPPPQPAWRTMMDQMASDGVSAYRAVVRENPEFVEYFRQATPEQELGRLPLGSRPAKRREGGVESLRAIPWIFAWTQTRLMLPAWLGWEAALSKALERGEGEVLAQMREQWPFFRTRIDMLEMVLAKADADIARLYDERLVTAELQHLGAHLRDLLSQACNVVLGLTGQTQLLAHSPETLEFISLRNAYLDPLHLLQAELLSRSRNREASLDSPLELALLVSVAGIAAGLRNTG.

Catalysis depends on residues H140 and K545.

It belongs to the PEPCase type 1 family. It depends on Mg(2+) as a cofactor.

It catalyses the reaction oxaloacetate + phosphate = phosphoenolpyruvate + hydrogencarbonate. In terms of biological role, forms oxaloacetate, a four-carbon dicarboxylic acid source for the tricarboxylic acid cycle. The polypeptide is Phosphoenolpyruvate carboxylase (Pseudomonas syringae pv. tomato (strain ATCC BAA-871 / DC3000)).